The following is a 105-amino-acid chain: MGETEGKKEEADYKRLQTFPLVRHSDMPEEMRVETMELCVTACEKFSNNNESAAKMIKETMDKKFGSSWHVVIGEGFGFEITHEVKNLLYLYFGGTLAVCVWKCS.

It belongs to the dynein light chain family. In terms of assembly, consists of at least two heavy chains and a number of intermediate and light chains.

It is found in the cytoplasm. It localises to the cytoskeleton. The protein resides in the cilium axoneme. In terms of biological role, force generating protein of respiratory cilia. Produces force towards the minus ends of microtubules. Dynein has ATPase activity. This is Dynein axonemal light chain 4 (Dnal4) from Mus musculus (Mouse).